The primary structure comprises 675 residues: DNA ligase (675 aa).

NAD(+) contacts are provided by residues 35–39 (DEAYD), 84–85 (SL), and glutamate 116. Catalysis depends on lysine 118, which acts as the N6-AMP-lysine intermediate. The NAD(+) site is built by arginine 139, glutamate 180, lysine 296, and lysine 320. Residues cysteine 414, cysteine 417, cysteine 432, and cysteine 437 each coordinate Zn(2+). The region spanning 597–675 (PVDAFWNGKT…EREFLERLGM (79 aa)) is the BRCT domain.

It belongs to the NAD-dependent DNA ligase family. LigA subfamily. Mg(2+) serves as cofactor. It depends on Mn(2+) as a cofactor.

The enzyme catalyses NAD(+) + (deoxyribonucleotide)n-3'-hydroxyl + 5'-phospho-(deoxyribonucleotide)m = (deoxyribonucleotide)n+m + AMP + beta-nicotinamide D-nucleotide.. In terms of biological role, DNA ligase that catalyzes the formation of phosphodiester linkages between 5'-phosphoryl and 3'-hydroxyl groups in double-stranded DNA using NAD as a coenzyme and as the energy source for the reaction. It is essential for DNA replication and repair of damaged DNA. The sequence is that of DNA ligase from Syntrophobacter fumaroxidans (strain DSM 10017 / MPOB).